Here is a 1084-residue protein sequence, read N- to C-terminus: Teashirt homolog 1 (1084 aa).

Disordered stretches follow at residues 49 to 108 (EETE…SVSY), 140 to 167 (NSAT…TAST), and 269 to 298 (GHYR…MEME). 2 stretches are compositionally biased toward polar residues: residues 57 to 71 (QSYQ…TNQD) and 140 to 152 (NSAT…SQKE). 2 C2H2-type zinc fingers span residues 246–270 (FRCK…ETGH) and 307–331 (LKCM…KTKH). Over residues 269 to 284 (GHYRDDNRDKDSEKTK) the composition is skewed to basic and acidic residues. Residues 416-440 (LKCMECGSSHDTLQQLTAHMMVTGH) form a C2H2-type 3; atypical zinc finger. 2 disordered regions span residues 467-534 (SIPL…EKFE) and 653-728 (TGKV…LKAK). 3 stretches are compositionally biased toward basic and acidic residues: residues 496–534 (SEEK…EKFE), 653–671 (TGKV…EKSS), and 681–714 (KENK…ESTL). Serine 771 carries the phosphoserine modification. Residues 855-879 (GRLTPKSSTPSTVSEKSDADGSSFE) are disordered. A compositionally biased stretch (polar residues) spans 859–868 (PKSSTPSTVS). The homeobox; atypical DNA-binding region spans 891 to 961 (RKGRQSNWNP…NVKYQLRRTG (71 aa)). C2H2-type zinc fingers lie at residues 976 to 998 (FFCN…LETH) and 1044 to 1067 (FQCK…SKTH).

Belongs to the teashirt C2H2-type zinc-finger protein family. Interacts (via homeobox domain) with APBB1 (via PID domain 1).

The protein localises to the nucleus. Functionally, probable transcriptional regulator involved in developmental processes. May act as a transcriptional repressor (Potential). The chain is Teashirt homolog 1 (Tshz1) from Mus musculus (Mouse).